We begin with the raw amino-acid sequence, 153 residues long: UPF0756 membrane protein LCABL_15860 (153 aa).

The next 4 helical transmembrane spans lie at 4–24 (WLFL…SLII), 52–72 (WGVT…EIGF), 85–105 (WIAI…VGLL), and 115–135 (LVFG…GPVI).

Belongs to the UPF0756 family.

It localises to the cell membrane. The chain is UPF0756 membrane protein LCABL_15860 from Lacticaseibacillus casei (strain BL23) (Lactobacillus casei).